We begin with the raw amino-acid sequence, 1128 residues long: Nck-associated protein 1 (1128 aa).

Residue serine 2 is modified to N-acetylserine. Residues 640-665 are disordered; that stretch reads AVNKKSKKQTGKKGEPEREKPGVESM. Residues 651 to 665 show a composition bias toward basic and acidic residues; that stretch reads KKGEPEREKPGVESM. The chain crosses the membrane as a helical span at residues 995–1015; it reads IACLLMVFVAVSLPTLASNVM.

Belongs to the HEM-1/HEM-2 family. Component of the WAVE1 complex composed of ABI2, CYFIP1 or CYFIP2, BRK1, NCKAP1 and WASF1/WAVE1. Within the complex, a heterodimer containing NCKAP1 and CYFIP1 interacts with a heterotrimer formed by WAVE1, ABI2 and BRK1. Component of the WAVE2 complex composed of ABI1, CYFIP1/SRA1, NCKAP1/NAP1 and WASF2/WAVE2. CYFIP2 binds to activated RAC1 which causes the complex to dissociate, releasing activated WASF1. The complex can also be activated by NCK1. Associates preferentially with the first SH3 domain of NCK. Interacts with NYAP1, NYAP2 and MYO16. Interacts with TMEM132D. Preferentially expressed in brain, heart, liver and testis.

The protein localises to the cell membrane. It is found in the cell projection. The protein resides in the lamellipodium membrane. Its function is as follows. Part of the WAVE complex that regulates lamellipodia formation. The WAVE complex regulates actin filament reorganization via its interaction with the Arp2/3 complex. Actin remodeling activity is regulated by RAC1. As component of the WAVE1 complex, required for BDNF-NTRK2 endocytic trafficking and signaling from early endosomes. This Rattus norvegicus (Rat) protein is Nck-associated protein 1 (Nckap1).